We begin with the raw amino-acid sequence, 107 residues long: Nucleoid-associated protein Atu0095 (107 aa).

Positions 81–107 (KGEAQAQEKMADLTAGLPLPPGMKLPF) are disordered. Over residues 98–107 (PLPPGMKLPF) the composition is skewed to pro residues.

It belongs to the YbaB/EbfC family. As to quaternary structure, homodimer.

It is found in the cytoplasm. The protein resides in the nucleoid. In terms of biological role, binds to DNA and alters its conformation. May be involved in regulation of gene expression, nucleoid organization and DNA protection. The chain is Nucleoid-associated protein Atu0095 from Agrobacterium fabrum (strain C58 / ATCC 33970) (Agrobacterium tumefaciens (strain C58)).